The chain runs to 62 residues: UPF0434 protein Tola_2233 (62 aa).

Belongs to the UPF0434 family.

This Tolumonas auensis (strain DSM 9187 / NBRC 110442 / TA 4) protein is UPF0434 protein Tola_2233.